The primary structure comprises 229 residues: Somatolactin (229 aa).

Positions 1 to 24 are cleaved as a signal peptide; it reads MHLVSVIQRGVWAVLLWPNLLASS. Disulfide bonds link C29/C39, C87/C203, and C220/C228. 2 N-linked (GlcNAc...) asparagine glycosylation sites follow: N143 and N175.

Belongs to the somatotropin/prolactin family.

It is found in the secreted. This is Somatolactin from Cyclopterus lumpus (Lumpsucker).